A 582-amino-acid polypeptide reads, in one-letter code: L-fucose isomerase (582 aa).

Active-site proton acceptor residues include glutamate 333 and aspartate 357. Positions 333, 357, and 520 each coordinate Mn(2+).

This sequence belongs to the L-fucose isomerase family. Requires Mn(2+) as cofactor.

Its subcellular location is the cytoplasm. The catalysed reaction is L-fucose = L-fuculose. It participates in carbohydrate degradation; L-fucose degradation; L-lactaldehyde and glycerone phosphate from L-fucose: step 1/3. Functionally, converts the aldose L-fucose into the corresponding ketose L-fuculose. This is L-fucose isomerase from Vibrio vulnificus (strain YJ016).